The following is a 251-amino-acid chain: UPF0309 protein SAV_3856 (251 aa).

In terms of domain architecture, SIS spans 36–220; sequence IADTVADGGR…AGTLADRGIE (185 aa).

Belongs to the UPF0309 family.

This Streptomyces avermitilis (strain ATCC 31267 / DSM 46492 / JCM 5070 / NBRC 14893 / NCIMB 12804 / NRRL 8165 / MA-4680) protein is UPF0309 protein SAV_3856.